The primary structure comprises 127 residues: Small ribosomal subunit protein bS6 (127 aa).

Positions 96-127 (VTTPSPMMKEEKSRSLTPAAGDEGKPAEAAEA) are disordered. Residues 117–127 (DEGKPAEAAEA) show a composition bias toward basic and acidic residues.

It belongs to the bacterial ribosomal protein bS6 family.

Binds together with bS18 to 16S ribosomal RNA. This Azoarcus sp. (strain BH72) protein is Small ribosomal subunit protein bS6.